A 274-amino-acid polypeptide reads, in one-letter code: Diaminopimelate epimerase (274 aa).

Residues Asn-11, Gln-44, and Asn-64 each contribute to the substrate site. The Proton donor role is filled by Cys-73. Substrate contacts are provided by residues 74–75 (GN), Asn-157, Asn-190, and 208–209 (ER). The active-site Proton acceptor is Cys-217. 218 to 219 (GS) contacts substrate.

Belongs to the diaminopimelate epimerase family. Homodimer.

The protein resides in the cytoplasm. It catalyses the reaction (2S,6S)-2,6-diaminopimelate = meso-2,6-diaminopimelate. Its pathway is amino-acid biosynthesis; L-lysine biosynthesis via DAP pathway; DL-2,6-diaminopimelate from LL-2,6-diaminopimelate: step 1/1. Catalyzes the stereoinversion of LL-2,6-diaminopimelate (L,L-DAP) to meso-diaminopimelate (meso-DAP), a precursor of L-lysine and an essential component of the bacterial peptidoglycan. The polypeptide is Diaminopimelate epimerase (Shigella boydii serotype 18 (strain CDC 3083-94 / BS512)).